The chain runs to 137 residues: Competence protein D (137 aa).

Functionally, involved in transformation (genetic competence for DNA uptake). The chain is Competence protein D (comD) from Haemophilus influenzae (strain ATCC 51907 / DSM 11121 / KW20 / Rd).